The primary structure comprises 155 residues: Small ribosomal subunit protein uS7cz/uS7cy (155 aa).

The protein belongs to the universal ribosomal protein uS7 family. Part of the 30S ribosomal subunit.

It is found in the plastid. In terms of biological role, one of the primary rRNA binding proteins, it binds directly to 16S rRNA where it nucleates assembly of the head domain of the 30S subunit. The polypeptide is Small ribosomal subunit protein uS7cz/uS7cy (rps7-A) (Cuscuta exaltata (Tall dodder)).